We begin with the raw amino-acid sequence, 821 residues long: Spindle apparatus protein lin-5 (821 aa).

Residues Glu161–Ser199 are disordered. Positions Ala162–Gln180 are enriched in polar residues. Positions Thr181–Ser199 are enriched in low complexity. A coiled-coil region spans residues Lys211 to Lys634. Disordered stretches follow at residues Arg736–Ser758 and Leu779–Gln821.

As to quaternary structure, interacts with gpr-1; gpr-1 forms a complex with gpr-2 and GDP-bound goa-1.

Its subcellular location is the cytoplasm. It is found in the cell cortex. It localises to the cytoskeleton. The protein resides in the spindle. The protein localises to the chromosome. Its subcellular location is the centromere. It is found in the kinetochore. It localises to the microtubule organizing center. The protein resides in the centrosome. In terms of biological role, essential component of the spindle apparatus required for spindle positioning and chromosome movement. Acts to recruit or anchor gpr-1/gpr-2 complex to the spindle and cortex. Also involved, directly or indirectly, in cytokinesis and in the coupling of DNA replication, centrosome duplication and mitotic division. The polypeptide is Spindle apparatus protein lin-5 (lin-5) (Caenorhabditis elegans).